The chain runs to 457 residues: Phosphomethylpyrimidine synthase (457 aa).

Substrate-binding positions include asparagine 80, methionine 109, tyrosine 139, histidine 175, 195–197, 236–239, and glutamate 275; these read SRG and DSLR. Zn(2+) is bound at residue histidine 279. A substrate-binding site is contributed by tyrosine 302. Histidine 343 serves as a coordination point for Zn(2+). 3 residues coordinate [4Fe-4S] cluster: cysteine 423, cysteine 426, and cysteine 431.

Belongs to the ThiC family. It depends on [4Fe-4S] cluster as a cofactor.

The catalysed reaction is 5-amino-1-(5-phospho-beta-D-ribosyl)imidazole + S-adenosyl-L-methionine = 4-amino-2-methyl-5-(phosphooxymethyl)pyrimidine + CO + 5'-deoxyadenosine + formate + L-methionine + 3 H(+). It functions in the pathway cofactor biosynthesis; thiamine diphosphate biosynthesis. Its function is as follows. Catalyzes the synthesis of the hydroxymethylpyrimidine phosphate (HMP-P) moiety of thiamine from aminoimidazole ribotide (AIR) in a radical S-adenosyl-L-methionine (SAM)-dependent reaction. This is Phosphomethylpyrimidine synthase from Nostoc sp. (strain PCC 7120 / SAG 25.82 / UTEX 2576).